The chain runs to 230 residues: Orotidine 5'-phosphate decarboxylase (230 aa).

Substrate is bound by residues Asp10, Lys32, 59–68 (DLKYHDIPNT), Thr119, Arg180, Gln189, Gly209, and Arg210. Catalysis depends on Lys61, which acts as the Proton donor.

Belongs to the OMP decarboxylase family. Type 1 subfamily. In terms of assembly, homodimer.

It carries out the reaction orotidine 5'-phosphate + H(+) = UMP + CO2. It participates in pyrimidine metabolism; UMP biosynthesis via de novo pathway; UMP from orotate: step 2/2. Functionally, catalyzes the decarboxylation of orotidine 5'-monophosphate (OMP) to uridine 5'-monophosphate (UMP). The chain is Orotidine 5'-phosphate decarboxylase from Haemophilus ducreyi (strain 35000HP / ATCC 700724).